The chain runs to 326 residues: 4-hydroxy-3-methylbut-2-enyl diphosphate reductase (326 aa).

A [4Fe-4S] cluster-binding site is contributed by Cys22. Residues His51 and His84 each coordinate (2E)-4-hydroxy-3-methylbut-2-enyl diphosphate. His51 and His84 together coordinate dimethylallyl diphosphate. His51 and His84 together coordinate isopentenyl diphosphate. A [4Fe-4S] cluster-binding site is contributed by Cys106. Residue His134 coordinates (2E)-4-hydroxy-3-methylbut-2-enyl diphosphate. His134 is a dimethylallyl diphosphate binding site. Position 134 (His134) interacts with isopentenyl diphosphate. Catalysis depends on Glu136, which acts as the Proton donor. Residue Thr174 coordinates (2E)-4-hydroxy-3-methylbut-2-enyl diphosphate. A [4Fe-4S] cluster-binding site is contributed by Cys204. Ser232, Ser233, Asn234, and Ser276 together coordinate (2E)-4-hydroxy-3-methylbut-2-enyl diphosphate. Positions 232, 233, 234, and 276 each coordinate dimethylallyl diphosphate. Residues Ser232, Ser233, Asn234, and Ser276 each contribute to the isopentenyl diphosphate site.

Belongs to the IspH family. [4Fe-4S] cluster is required as a cofactor.

The enzyme catalyses isopentenyl diphosphate + 2 oxidized [2Fe-2S]-[ferredoxin] + H2O = (2E)-4-hydroxy-3-methylbut-2-enyl diphosphate + 2 reduced [2Fe-2S]-[ferredoxin] + 2 H(+). It catalyses the reaction dimethylallyl diphosphate + 2 oxidized [2Fe-2S]-[ferredoxin] + H2O = (2E)-4-hydroxy-3-methylbut-2-enyl diphosphate + 2 reduced [2Fe-2S]-[ferredoxin] + 2 H(+). Its pathway is isoprenoid biosynthesis; dimethylallyl diphosphate biosynthesis; dimethylallyl diphosphate from (2E)-4-hydroxy-3-methylbutenyl diphosphate: step 1/1. It participates in isoprenoid biosynthesis; isopentenyl diphosphate biosynthesis via DXP pathway; isopentenyl diphosphate from 1-deoxy-D-xylulose 5-phosphate: step 6/6. In terms of biological role, catalyzes the conversion of 1-hydroxy-2-methyl-2-(E)-butenyl 4-diphosphate (HMBPP) into a mixture of isopentenyl diphosphate (IPP) and dimethylallyl diphosphate (DMAPP). Acts in the terminal step of the DOXP/MEP pathway for isoprenoid precursor biosynthesis. In Bordetella parapertussis (strain 12822 / ATCC BAA-587 / NCTC 13253), this protein is 4-hydroxy-3-methylbut-2-enyl diphosphate reductase.